Consider the following 598-residue polypeptide: MLEQASNLHLFADVLARVHAICAALAKDGNWPEGIDVSRVVVEPPRDPSHGDMATNAAMVLAKEAKAKPRDLAEAIAERLRADELVAKVDVAGPGFINLTLHPVVWARQLGTILRDGDAYGRIAPVVGAPKVNVEYVSANPTGPMHVGHCRGAVFGDALCSLLQFAGRDVTREYYINDAGAQVDVLARSAFLRYREALGEEIGAIPEGLYPGDYLKPVGQALAAEHGDRLKAMPEAQWLPIVRDKAIAMMMAEIKDDLAALNIRHDVFFSERSLIAGSTNKVAETIEFLRERGDVYEGRLPPPKGAPVEDWEDREQLLFRATAYGDDVDRPLIKSDGSYTYFASDIANHRHKFERGFADLIDVFGADHGGYIKRMQAAVKAVTAAQAVLDVKVVQLVKLLRNGEPVKMSKRSGDFVTLREVVDEVGRDAVRFMMLYRKNDAVLDFDLAKVIEQSRDNPVFYVQYGHARGHSIFRNARDSFPSLPVEEGARLAFLRQAKLEKLADPSEIDLLKRLALYPRTVESAALAHEPHRVAFYLYDLASEFHALWTRGRDLPYLRFIIDDDAELTMARLAMVQGVVSVLASGLAILGVNAPDAMR.

The 'HIGH' region signature appears at 139–149 (ANPTGPMHVGH).

Belongs to the class-I aminoacyl-tRNA synthetase family. Monomer.

It is found in the cytoplasm. It carries out the reaction tRNA(Arg) + L-arginine + ATP = L-arginyl-tRNA(Arg) + AMP + diphosphate. This Bradyrhizobium sp. (strain BTAi1 / ATCC BAA-1182) protein is Arginine--tRNA ligase.